The sequence spans 415 residues: 3-isopropylmalate dehydratase large subunit (415 aa).

The [4Fe-4S] cluster site is built by C297, C355, and C358.

The protein belongs to the aconitase/IPM isomerase family. LeuC type 2 subfamily. As to quaternary structure, heterodimer of LeuC and LeuD. [4Fe-4S] cluster serves as cofactor.

The enzyme catalyses (2R,3S)-3-isopropylmalate = (2S)-2-isopropylmalate. It functions in the pathway amino-acid biosynthesis; L-leucine biosynthesis; L-leucine from 3-methyl-2-oxobutanoate: step 2/4. In terms of biological role, catalyzes the isomerization between 2-isopropylmalate and 3-isopropylmalate, via the formation of 2-isopropylmaleate. This chain is 3-isopropylmalate dehydratase large subunit, found in Metallosphaera sedula (strain ATCC 51363 / DSM 5348 / JCM 9185 / NBRC 15509 / TH2).